Consider the following 119-residue polypeptide: Evasin P983 (119 aa).

The N-terminal stretch at 1–21 (MKASFCVIASCLVVFALKGTA) is a signal peptide. 4 disulfide bridges follow: C37–C59, C55–C97, C72–C102, and C92–C111. N48 and N67 each carry an N-linked (GlcNAc...) asparagine glycan.

It localises to the secreted. Salivary chemokine-binding protein which binds to host chemokines CCL2, CCL3 and CCL8. This chain is Evasin P983, found in Amblyomma cajennense (Cayenne tick).